A 131-amino-acid polypeptide reads, in one-letter code: Riboflavin kinase (131 aa).

11–16 (GLQKAG) provides a ligand contact to CDP. 2 residues coordinate Mg(2+): T40 and N42. The FMN site is built by T98 and E106. 111 to 114 (EKLR) serves as a coordination point for CDP.

This sequence belongs to the archaeal riboflavin kinase family. Mg(2+) is required as a cofactor.

It catalyses the reaction riboflavin + CTP = CDP + FMN + H(+). It functions in the pathway cofactor biosynthesis; FMN biosynthesis; FMN from riboflavin (CTP route): step 1/1. Functionally, catalyzes the CTP-dependent phosphorylation of riboflavin (vitamin B2) to form flavin mononucleotide (FMN). The polypeptide is Riboflavin kinase (Methanosphaera stadtmanae (strain ATCC 43021 / DSM 3091 / JCM 11832 / MCB-3)).